Consider the following 444-residue polypeptide: Gamma-glutamyl phosphate reductase (444 aa).

It belongs to the gamma-glutamyl phosphate reductase family.

It is found in the cytoplasm. It catalyses the reaction L-glutamate 5-semialdehyde + phosphate + NADP(+) = L-glutamyl 5-phosphate + NADPH + H(+). Its pathway is amino-acid biosynthesis; L-proline biosynthesis; L-glutamate 5-semialdehyde from L-glutamate: step 2/2. In terms of biological role, catalyzes the NADPH-dependent reduction of L-glutamate 5-phosphate into L-glutamate 5-semialdehyde and phosphate. The product spontaneously undergoes cyclization to form 1-pyrroline-5-carboxylate. In Albidiferax ferrireducens (strain ATCC BAA-621 / DSM 15236 / T118) (Rhodoferax ferrireducens), this protein is Gamma-glutamyl phosphate reductase.